The chain runs to 321 residues: Peroxidase 42 (321 aa).

Positions 1–29 are cleaved as a signal peptide; sequence MATSSGSCLIISLLVVVVAAALSASTASA. Q30 is modified (pyrrolidone carboxylic acid). 4 disulfides stabilise this stretch: C40/C118, C73/C78, C124/C315, and C202/C227. H71 (proton acceptor) is an active-site residue. Ca(2+)-binding residues include D72, I75, G77, D79, and S81. N85 and N96 each carry an N-linked (GlcNAc...) asparagine glycan. P165 provides a ligand contact to substrate. H195 provides a ligand contact to heme b. T196 contributes to the Ca(2+) binding site. An N-linked (GlcNAc...) asparagine glycan is attached at N211. Ca(2+)-binding residues include D239, T242, and G247. The N-linked (GlcNAc...) asparagine glycan is linked to N270.

Belongs to the peroxidase family. Classical plant (class III) peroxidase subfamily. Heme b serves as cofactor. The cofactor is Ca(2+).

The protein resides in the secreted. It carries out the reaction 2 a phenolic donor + H2O2 = 2 a phenolic radical donor + 2 H2O. In terms of biological role, removal of H(2)O(2), oxidation of toxic reductants, biosynthesis and degradation of lignin, suberization, auxin catabolism, response to environmental stresses such as wounding, pathogen attack and oxidative stress. These functions might be dependent on each isozyme/isoform in each plant tissue. The polypeptide is Peroxidase 42 (PER42) (Zea mays (Maize)).